The following is a 248-amino-acid chain: UPF0736 protein BcerKBAB4_1085 (248 aa).

It belongs to the UPF0736 family.

This Bacillus mycoides (strain KBAB4) (Bacillus weihenstephanensis) protein is UPF0736 protein BcerKBAB4_1085.